Consider the following 2096-residue polypeptide: MSTALAQQLQKLAAPQSSVTLADARSRASILFDPKEAATKDRRSIYEIGLTGLQELTDFNPAFKEFQLTLFDEATLTLERSVELPEINKMLDAAIAKFLRLLSPYLLLRPAHMAFEWLLRRFQVHEYNRSEVMALILPYHETMIFVQIVKTMRLRSSDGDWYWLRPLQRPGVPLAKTAIINRAASNPAFLGFICQSTQKAVKELGPRAHQLQAQINFYATVVVGALQTAKPLQDWHITTILESLLRGLISDNIDFMAAAYVIVAQLVSRTKLKSKVCNALLERVANCPFERLHSESLLLLVCIYGKQQAALPHFKPETILNLVGKKWLISTLSSLAKGNIAIQSICMPLMTGAVAAIRDDDASSNSCKLFLDNLLSEVPMPKPTAQQLINCFLDTYVETAIDAPEPMETNSNEDDDTIVIDSDDEIETEKTTFQAWYSTYLEKLERRYPEAFDLSVKEALRSKSSTSNRQKALKLALGFRLNTTDEKAKHAYEKLYHYSADWRLSAVQKLLQNLNVTKKRERSVKLLQECLPDRINDDSGAVVSTLLSLPTEELAEMLGPLPLAQTLCHLLYRAQSEKDEEWQPVVPLAVRHLTSALVSGSYDTNLVLLALMPLLFPGEALAEHQHKALRILLGSDFVSKVPFLAELKVSNKFSDFNVGEHRQHFLDIIASSNQELSSQERALLQSVEDHGGELYIQKASQLTHLLLLLTAYAKRELQPRESLHMLEKIGLYSRRLQFRVVNGSQNTQNCAPLQLYVDFLLTLVKNTKWTALASTPWNQMTDELRLCLRLLEIICAQVFSEKADQPERQEWTRALQQSLQLILPEAQDRLEVLSNFYVFERLPELWPRDSDYAVFRLQGFIILEAVLSNPKSQIDCGLVHVLRVANACGSPLQTLRVQAINILQLISNRKLVSHVEQLVRSLLQRKSELSMDHEQYALILYTILEPEKATAKERLVLSKLKRSVLALASDPKQSPICTASLLAALKHVNDENFLNELLPLGLDSLKTITAGEDNQNIKQLPWPHSEIYKSVIERFEGRVALNVLLRKDLAWKLFEDSFAQYDTYVQLEQKLQPLPCVLLNSLTPETFEQMHAKHKIALIKLIVESATNSDNDSIFLASHRLLKRCRLDCQPLVPILLEMANTKVEKKQPVKRRSVQATQLDLTSPYWKQGMTLLELLEHKKQLVGAELLIPPLFELLQACLTMEEHSAAEYPKQLILSSLLHCCQTAQSAGVQLVKAMPESSFRIELVVQSLRNTRNPQTQQHALLFLTHCAGMYPQQVLHKIVEIFTFVGSTVARHDDAFSLHIIHNVVESIIPILLLNTGHNELVIPVLKVFADICTDVPVHRRLPLYATLFRVLEPKEHLWQFLCIIFESQVLLEQVPQKVSTDKSRLDFARELTLMFEDPTVAIQTCIRLLDYLAKLPATKSSLSGGSGSSVLSTEQQLFDVRTRTFKQLRHYKYLIMDFLSGISSCNEWEKKMKRPDPNELLPYYQEFILKTLAYVGVLNGALEAASETPSLEKFWRVLANHAHDVLDNAIGLLAPQHFISVITELLKHDHVYVRIKVMDLLVTKLSPSSDYFQQSNAEHFGVLFAPLQEIINGILEGSSNSAQQAKLQQTALHALQLLALRHGRDYIEECRSLLATLTKITKRRANVPKAVVGNVVLTLVEICASLKAHALAQLPKFAPQLTELLKEQVHQMASLKQGPDYVCSTLVTALHKLFKALPLFLGPYLVDIIGGLARLSVQLENPQLLQDKRTQVLKQKLADVWSAVAQGVEVRILVPSCAKAFSSLLEQQAYDELGHLMQQLLLQSVRHNSAAQLQPVQDPLSELFLQALNFRLQVRGLGLQRQLVSDVEASITETFVTWILKLSETSFRPMYSRVHKWALESTSRETRLTYFLLTNRIAEALKSLFVLFASDFVEDSSRLLTEHNSIRPEFEVEEREDDVDLLMAILNTLHHVFLYCSEDFINDHRFNVLMPPLVNQLENDLVLGNESLQQVLSNCIAQFAVATNDVMWKQLNSQVLLKTRTSNPEVRILAFNSCVAIARKLGESYAALLPETVPFIAELLEDEHQRVEKNTRTGVQELETILGESVQKYL.

An HEAT repeat occupies 2058 to 2096 (TVPFIAELLEDEHQRVEKNTRTGVQELETILGESVQKYL).

It belongs to the HEATR1/UTP10 family. As to quaternary structure, part of the small subunit (SSU) processome, composed of more than 70 proteins and the RNA chaperone small nucleolar RNA (snoRNA) U3. Interacts with MYC; the interaction is required for localization of MYC to the nucleolus.

Its subcellular location is the nucleus. It localises to the nucleolus. Functionally, ribosome biogenesis factor; required for recruitment of Myc to nucleoli. Involved in nucleolar processing of pre-18S ribosomal RNA. Required for optimal pre-ribosomal RNA transcription by RNA polymerase I. Part of the small subunit (SSU) processome, first precursor of the small eukaryotic ribosomal subunit. During the assembly of the SSU processome in the nucleolus, many ribosome biogenesis factors, an RNA chaperone and ribosomal proteins associate with the nascent pre-rRNA and work in concert to generate RNA folding, modifications, rearrangements and cleavage as well as targeted degradation of pre-ribosomal RNA by the RNA exosome. Involved in neuronal-lineage cell proliferation during larval development. The protein is HEAT repeat-containing protein 1 homolog of Drosophila melanogaster (Fruit fly).